A 963-amino-acid chain; its full sequence is MDPLWYKDAVIYQLHVRSFFDANNDGYGDFEGLRRKLPYLEELGVNTLWLMPFFQSPLRDDGYDISDYYQILPVHGTLEDFTVDEAHGRGMKVIIELVLNHTSIDHPWFQEARKPNSPMRDWYVWSDTPEKYKGVRVIFKDFETSNWTFDPVAKAYYWHRFYWHQPDLNWDSPEVEKAIHQVMFFWADLGVDGFRLDAIPYLYEREGTSCENLPETIEAVKRLRKALEERYGPGKILLAEVNMWPEETLPYFGDGDGVHMAYNFPLMPRIFMALRREDRGPIETMLKEAEGIPETAQWALFLRNHDELTLEKVTEEEREFMYEAYAPDPKFRINLGIRRRLMPLLGGDRRRYELLTALLLTLKGTPIVYYGDEIGMGDNPFLGDRNGVRTPMQWSQDRIVAFSRAPYHALFLPPVSEGPYSYHFVNVEAQRENPHSLLSFNRRFLALRNQHAKIFGRGSLTLLPVENRRVLAYLREHEGERVLVVANLSRYTQAFDLPLEAYQGLVPVELFSQQPFPPVEGRYRLTLGPHGFALFALKPVEAVLHLPSPDWAEEPAPEEADLPRVHMPGGPEVLLVDTLVHERGREELLNALAQTLKEKSWLALKPQKVALLDALRFQKDPPLYLTLLQLENHRTLQVSLPLLWSPQRREGPGLFARTHGQPGYFYELSLDPGFYRLLLARLKEGFEGRSLRAYYRGRHPGPVPEAVDLLRPGLAAGEGVWVQLGLVQDGGLDRTERVLPRLDLPWVLRPEGGLFWERGASRRVLALTGSLPPGRPQDLFAALEVRLLESLPRLRGHAPGTPGLLPGALHETEALVRLLGVRLALLHRALGEVEGVVGGHPLLGRGLGAFLELEGEVYLVALGAEKRGTVEEDLARLAYDVERAVHLALEALEAELWAFAEEVADHLHAAFLQAYRSALPEEALEEAGWTRHMAEVAAEHLHREERPARKRIHERWQAKAGKA.

A substrate-binding site is contributed by Asp-60. Asn-100 contacts Ca(2+). Substrate is bound by residues His-101 and Gln-165. Asp-167 is a Ca(2+) binding site. Substrate is bound at residue Arg-195. Asp-197 serves as the catalytic Nucleophile. Positions 201, 202, and 204 each coordinate Ca(2+). Glu-240 acts as the Proton donor in catalysis. Residues His-305 and Asp-306 each contribute to the substrate site.

This sequence belongs to the glycosyl hydrolase 13 family. TreS subfamily.

The enzyme catalyses D-maltose = alpha,alpha-trehalose. Functionally, catalyzes the reversible interconversion of maltose and alpha,alpha-trehalose by transglucosylation. This Thermus thermophilus protein is Trehalose synthase (treS).